A 145-amino-acid polypeptide reads, in one-letter code: D-aminoacyl-tRNA deacylase (145 aa).

Positions 137 to 138 (GP) match the Gly-cisPro motif, important for rejection of L-amino acids motif.

This sequence belongs to the DTD family. In terms of assembly, homodimer.

The protein localises to the cytoplasm. The enzyme catalyses glycyl-tRNA(Ala) + H2O = tRNA(Ala) + glycine + H(+). It carries out the reaction a D-aminoacyl-tRNA + H2O = a tRNA + a D-alpha-amino acid + H(+). An aminoacyl-tRNA editing enzyme that deacylates mischarged D-aminoacyl-tRNAs. Also deacylates mischarged glycyl-tRNA(Ala), protecting cells against glycine mischarging by AlaRS. Acts via tRNA-based rather than protein-based catalysis; rejects L-amino acids rather than detecting D-amino acids in the active site. By recycling D-aminoacyl-tRNA to D-amino acids and free tRNA molecules, this enzyme counteracts the toxicity associated with the formation of D-aminoacyl-tRNA entities in vivo and helps enforce protein L-homochirality. The chain is D-aminoacyl-tRNA deacylase from Shewanella denitrificans (strain OS217 / ATCC BAA-1090 / DSM 15013).